A 142-amino-acid polypeptide reads, in one-letter code: Acidic phospholipase A2 PA4 (142 aa).

Residues Trp-10, Gly-12, and Gly-14 each coordinate Ca(2+). 3 cysteine pairs are disulfide-bonded: Cys-11–Cys-33, Cys-32–Cys-72, and Cys-39–Cys-65. His-36 is an active-site residue. Position 37 (Asp-37) interacts with Ca(2+).

The protein belongs to the phospholipase A2 family. Group III subfamily. Requires Ca(2+) as cofactor. In terms of tissue distribution, expressed by the venom gland.

It is found in the secreted. It catalyses the reaction a 1,2-diacyl-sn-glycero-3-phosphocholine + H2O = a 1-acyl-sn-glycero-3-phosphocholine + a fatty acid + H(+). In terms of biological role, PLA2 catalyzes the calcium-dependent hydrolysis of the 2-acyl groups in 3-sn-phosphoglycerides. This chain is Acidic phospholipase A2 PA4, found in Heloderma suspectum (Gila monster).